Here is a 333-residue protein sequence, read N- to C-terminus: Coiled-coil domain-containing protein 68 (333 aa).

Coiled-coil stretches lie at residues 86–120 (LDLL…SREA) and 160–302 (EKEQ…HWTE).

Interacts with CEP170.

The protein localises to the cytoplasm. The protein resides in the cytoskeleton. It localises to the microtubule organizing center. Its subcellular location is the centrosome. It is found in the centriole. In terms of biological role, centriolar protein required for centriole subdistal appendage assembly and microtubule anchoring in interphase cells. Together with CCDC120, cooperate with subdistal appendage components ODF2, NIN and CEP170 for hierarchical subdistal appendage assembly. The sequence is that of Coiled-coil domain-containing protein 68 (Ccdc68) from Mus musculus (Mouse).